Reading from the N-terminus, the 154-residue chain is uncharacterized protein (154 aa).

The next 5 membrane-spanning stretches (helical) occupy residues 5-24 (TLII…GVLL), 29-48 (FYAA…IYAA), 53-75 (PVVV…AIAA), 87-109 (IFWV…SMAV), and 124-146 (ATDY…LSAI).

The protein localises to the cell membrane. This is an uncharacterized protein from Archaeoglobus fulgidus (strain ATCC 49558 / DSM 4304 / JCM 9628 / NBRC 100126 / VC-16).